A 60-amino-acid chain; its full sequence is uncharacterized protein (60 aa).

The tract at residues 27–50 (VKNNNNNNNNNNNNNNNNNNNNNK) is disordered. The segment covering 29–49 (NNNNNNNNNNNNNNNNNNNNN) has biased composition (low complexity).

This is an uncharacterized protein from Dictyostelium discoideum (Social amoeba).